An 85-amino-acid chain; its full sequence is Cell division topological specificity factor (85 aa).

The protein belongs to the MinE family.

In terms of biological role, prevents the cell division inhibition by proteins MinC and MinD at internal division sites while permitting inhibition at polar sites. This ensures cell division at the proper site by restricting the formation of a division septum at the midpoint of the long axis of the cell. This Xanthomonas campestris pv. campestris (strain 8004) protein is Cell division topological specificity factor.